A 349-amino-acid polypeptide reads, in one-letter code: Holliday junction branch migration complex subunit RuvB (349 aa).

The span at 1–15 (MSDDYRETDPTRQPE) shows a compositional bias: basic and acidic residues. The interval 1–25 (MSDDYRETDPTRQPEDMGEGSLRPE) is disordered. A large ATPase domain (RuvB-L) region spans residues 1 to 183 (MSDDYRETDP…FGIPLRLVFY (183 aa)). ATP contacts are provided by residues Leu-22, Arg-23, Gly-64, Lys-67, Thr-68, Thr-69, 130–132 (EDF), Arg-173, Tyr-183, and Arg-220. Thr-68 lines the Mg(2+) pocket. The tract at residues 184 to 254 (TPEELRAIVS…LADAALGRLE (71 aa)) is small ATPAse domain (RuvB-S). Positions 257–349 (ERGLDAMDRR…SSLEQDDSAP (93 aa)) are head domain (RuvB-H). Residues Arg-293, Arg-312, and Arg-317 each contribute to the DNA site.

It belongs to the RuvB family. In terms of assembly, homohexamer. Forms an RuvA(8)-RuvB(12)-Holliday junction (HJ) complex. HJ DNA is sandwiched between 2 RuvA tetramers; dsDNA enters through RuvA and exits via RuvB. An RuvB hexamer assembles on each DNA strand where it exits the tetramer. Each RuvB hexamer is contacted by two RuvA subunits (via domain III) on 2 adjacent RuvB subunits; this complex drives branch migration. In the full resolvosome a probable DNA-RuvA(4)-RuvB(12)-RuvC(2) complex forms which resolves the HJ.

It localises to the cytoplasm. The enzyme catalyses ATP + H2O = ADP + phosphate + H(+). Its function is as follows. The RuvA-RuvB-RuvC complex processes Holliday junction (HJ) DNA during genetic recombination and DNA repair, while the RuvA-RuvB complex plays an important role in the rescue of blocked DNA replication forks via replication fork reversal (RFR). RuvA specifically binds to HJ cruciform DNA, conferring on it an open structure. The RuvB hexamer acts as an ATP-dependent pump, pulling dsDNA into and through the RuvAB complex. RuvB forms 2 homohexamers on either side of HJ DNA bound by 1 or 2 RuvA tetramers; 4 subunits per hexamer contact DNA at a time. Coordinated motions by a converter formed by DNA-disengaged RuvB subunits stimulates ATP hydrolysis and nucleotide exchange. Immobilization of the converter enables RuvB to convert the ATP-contained energy into a lever motion, pulling 2 nucleotides of DNA out of the RuvA tetramer per ATP hydrolyzed, thus driving DNA branch migration. The RuvB motors rotate together with the DNA substrate, which together with the progressing nucleotide cycle form the mechanistic basis for DNA recombination by continuous HJ branch migration. Branch migration allows RuvC to scan DNA until it finds its consensus sequence, where it cleaves and resolves cruciform DNA. This Gluconobacter oxydans (strain 621H) (Gluconobacter suboxydans) protein is Holliday junction branch migration complex subunit RuvB.